The following is a 501-amino-acid chain: TNF receptor-associated factor 2 (501 aa).

Ala2 bears the N-acetylalanine mark. Ser5 is subject to Phosphoserine. Residue Thr7 is modified to Phosphothreonine. Ser11 is subject to Phosphoserine. Thr22 bears the Phosphothreonine mark. Lys31 is covalently cross-linked (Glycyl lysine isopeptide (Lys-Gly) (interchain with G-Cter in ubiquitin)). The RING-type zinc-finger motif lies at 34–73 (CSACRNVLRRPFQAQCGHRYCSFCLASILSSGPQNCAACV). The residue at position 117 (Thr117) is a Phosphothreonine; by PKC. TRAF-type zinc fingers lie at residues 124–180 (CHEG…AHHE) and 177–233 (AHHE…EKQQ). Residues 283-293 (ENIVCVLNREV) form an important for interaction with BIRC2 and BIRC3 region. Residues 299-348 (TAEACSRQHRLDQDKIEALSSKVQQLERSIGLKDLAMADLEQKVLEMEAS) are a coiled coil. Lys320 is covalently cross-linked (Glycyl lysine isopeptide (Lys-Gly) (interchain with G-Cter in ubiquitin)). The MATH domain maps to 351 to 496 (DGVFIWKISD…DDAIFIKAIV (146 aa)).

This sequence belongs to the TNF receptor-associated factor family. A subfamily. In terms of assembly, homotrimer. Heterotrimer with TRAF1. Heterotrimer with TRAF3 (via TRAF domain). The domain containing the RING-type and the first TRAF-type zinc finger can also form homodimers (in vitro). Interacts with TNFRSF1B/TNFR2. Interacts with TNFRSF5/CD40. Interacts with TNFRSF4, TNFRSF7/CD27, TNFRSF8/CD30, TNFRSF9/CD137, TNFRSF11A/RANK, TNFRSF13B/TACI, TNFRSF14, TNFRSF16/NGFR, TNFRSF17/BCMA, TNFRSF18/AITR, TNFRSF19/TROY, TNFRSF19L/RELT and EDAR. Stimulation of TNF-alpha receptor TNFRSF1A leads to the formation of two distinct signaling complexes. Plasma membrane-bound complex I is composed of TNFRSF1A, TRADD, RIPK1, TRAF2 and BIRC2/c-IAP1 or BIRC3 which interacts with CHUCK/IKK-alpha, IKBKB/IKK-beta and IKBKG/IKK-gamma promoting cell survival. Subsequently, TRADD, RIPK1 and TRAF2 dissociate from TNFRSF1A and form cytoplasmic complex II with FADD and caspase CASP8 promoting cell apoptosis. Interacts with TRADD. Identified in a complex with TNFRSF1A, RIPK1 and IKBKB/IKK-beta. Interacts with RIPK2. Interacts with BIRC2 and BIRC3 N-terminus; a single BIRC2 or BIRC3 molecule interacts with a heterotrimer formed by TRAF1 and TRAF2, or a TRAF2 homotrimer. Identified in a complex composed of TRAF2, TRAF3, BIRC2 and BIRC3. Interacts with BIRC2; the interaction promotes BIRC2 stability. Interaction with BIRC2 and/or BIRC3 is essential for ubiquitination of IKBKE, degradation of NFKBIA and activation of NF-kappa-B. Within complex I, phosphorylated TRAF2 interacts (via 'Lys-63'-linked polyubiquitin chains) with CHUCK/IKK-alpha, IKBKB/IKK-beta, IKBKG/IKK-gamma TAB2, TAB3 and TAK1 in response to TNF-alpha stimulation. Within complex I, interacts with UXT isoform 1 (via TPQE motif); the interaction prevents the recruitment of FADD and CASP8/caspase 8 to complex I. Forms a complex composed of TNFRSF8/CD30 or TNFRSF1B/TNFR2, and TRAF1, TRAF2 and E3 ligase TRAIP. Within the complex, interacts with TRAIP; the interaction inhibits TRAF2-mediated NF-kappa B activation. Component of a complex composed of TANK and TBK1. Interacts with TRPC4AP. Interacts with MAP3K1/MEKK1, MAP3K5/ASK1 and MAP3K11/MLK3 in response to TNF-alpha stimulation; the interaction leads to JNK activation and interaction with MAP3K5 is inhibited by PRMT1. Component of a complex composed of MAP3K14/NIK BIRC3 and TRAF3; the interaction leads to BIRC2/3-mediated ubiquitination of TRAF3 upon CD40 engagement in a TRAF2-dependent manner. Interacts with MAP3K14/NIK in response to TNF-alpha stimulation; the interaction leads to NF-kappa B activation. Interacts with PEG3; the interaction may promote TRAF2-mediated NF-kappa B activation. Interacts with HIVEP3; the interaction may inhibit TNF-alpha-TRAF2-mediated NF-kappa B and JNK activation. Interacts with TANK/ITRAF; the interaction prevents interaction between TNFRSF1B/TNFR2 and TRAF2. Interacts with deubiquitinating enzyme CYLD; the interaction results in the deubiquitination and inactivation of TRAF2. Interacts with SIAH2; the interaction leads to TRAF2 ubiquitination and degradation. Interacts with E2 conjugating enzyme UBE2N/Ubc13, E3 ligase ITCH and RNF11 in response to TNF-alpha stimulation. Interacts with ubiquitin-editing enzyme TNFAIP3/A20 in response to TNF-alpha stimulation; the interaction promotes TRAF2 dissociation from UBE2N/Ubc13, ITCH, RNF11 and TAX1BP1 and prevents prolonged TRAF-2 ubiquitination. Interacts with TAX1BP1 in response to TNF-alpha stimulation; the interaction promotes TRAF2 dissociation from UBE2N/Ubc13 and TNFAIP3/A20, and prevents prolonged TRAF-2 ubiquitination. Interacts (via C-terminus) with EIF2AK2/PKR (via the kinase catalytic domain). Interacts with deubiquitinating enzyme USP48. Interacts with PTPN2; probably involved in TNF-mediated signaling. Interacts with Toll-like receptor TLR4/3 adapter TICAM1/TRIF; the interaction may promote TICAM1 ubiquitination. Interacts with kinase/endoribonuclease ERN1/IRE1 and DAB2IP in response to ER stress; the interaction requires DAB2IP. Interacts with ERN1/IRE1 and TAOK3 in response to ER stress; the interaction may promote TRAF2 phosphorylation. Interacts (via zinc fingers) with DAB2IP (via C-terminus PER domain)in response to TNF-alpha stimulation. Interacts with CASP8AP2/FLASH. Interacts with NFATC2IP; the interaction may repress IL-4 production in T cells. Interacts with kinase CDK9. Interacts with sphingosine kinase 1 SPHK1. Interacts with kinase TNIK. Interacts with TRAFD1. Interacts with DNA phosphodiesterase TDP2. Interacts with MAVS/IPS1. Interacts with CARD14. Interacts with Epstein-Barr virus LMP1/BNFL1. Interacts with GPS2. Interacts with XPNPEP3. Interacts with RIPK3. Interacts with RELL2. Interacts with LRRC19. Interacts with GAPDH; promoting TRAF2 ubiquitination. Post-translationally, phosphorylated at several serine residues within the first 128 amino acid residues. Phosphorylated at Thr-117 in response to signaling via TNF and TNFRSF1A. Phosphorylation at Thr-117 is required for 'Lys-63'-linked polyubiquitination, but not for 'Lys-48'-linked polyubiquitination. Phosphorylation at Thr-117 is important for interaction with IKKA and IKKB, activation of IKK and subsequent activation of NF-kappa-B. Undergoes both 'Lys-48'-linked and 'Lys-63'-linked polyubiquitination. Polyubiquitinated via 'Lys-63'-linked ubiquitin in response to TNF signaling; this requires prior phosphorylation at Thr-117. 'Lys-63'-linked polyubiquitination promotes TRAF2-mediated activation of NF-kappa-B. Can be polyubiquitinated at several Lys residues via 'Lys-48'-linked ubiquitin chains in response to TNF signaling, leading to proteasomal degradation. Autoubiquitinated, leading to its subsequent proteasomal degradation. Polyubiquitinated by BIRC2 and SIAH2, leading to its subsequent proteasomal degradation. Deubiquitinated by CYLD, a protease that specifically cleaves 'Lys-63'-linked polyubiquitin chains. Ubiquination is inhibited by LRRC19; inhibits proteasomal degradation. Ubiquitinated at Lys-320 by the SCF(FBXL2) complex, leading to its degradation by the proteasome. Ubiquitinated by E3 ubiquitin-protein ligase complex containing FBXO7; leading to repression of NF-kappa-B signaling.

The protein resides in the cytoplasm. The enzyme catalyses S-ubiquitinyl-[E2 ubiquitin-conjugating enzyme]-L-cysteine + [acceptor protein]-L-lysine = [E2 ubiquitin-conjugating enzyme]-L-cysteine + N(6)-ubiquitinyl-[acceptor protein]-L-lysine.. Its pathway is protein modification; protein ubiquitination. Has very low E3 ubiquitin ligase activity in the absence of sphingosine-1-phosphate. E3 ubiquitin ligase activity is strongly activated by cytoplasmic sphingosine-1-phosphate. Its function is as follows. E3 ubiquitin-protein ligase that regulates activation of NF-kappa-B and JNK and plays a central role in the regulation of cell survival and apoptosis. Catalyzes 'Lys-63'-linked ubiquitination of target proteins, such as BIRC3, IKBKE, MLST8, RIPK1 and TICAM1. Is an essential constituent of several E3 ubiquitin-protein ligase complexes, where it promotes the ubiquitination of target proteins by bringing them into contact with other E3 ubiquitin ligases. Regulates BIRC2 and BIRC3 protein levels by inhibiting their autoubiquitination and subsequent degradation; this does not depend on the TRAF2 RING-type zinc finger domain. Plays a role in mediating activation of NF-kappa-B by EIF2AK2/PKR. In complex with BIRC2 or BIRC3, promotes ubiquitination of IKBKE. Acts as a regulator of mTORC1 and mTORC2 assembly by mediating 'Lys-63'-linked ubiquitination of MLST8, thereby inhibiting formation of the mTORC2 complex, while facilitating assembly of the mTORC1 complex. Required for normal antibody isotype switching from IgM to IgG. The sequence is that of TNF receptor-associated factor 2 from Homo sapiens (Human).